We begin with the raw amino-acid sequence, 202 residues long: Rho GDP-dissociation inhibitor (202 aa).

N-acetylalanine is present on alanine 2. Residue threonine 27 is modified to Phosphothreonine. Phosphoserine is present on serine 40.

Belongs to the Rho GDI family.

It is found in the cytoplasm. Functionally, regulates the GDP/GTP exchange reaction of the Rho proteins by inhibiting the dissociation of GDP from them, and the subsequent binding of GTP to them. The sequence is that of Rho GDP-dissociation inhibitor (RDI1) from Saccharomyces cerevisiae (strain ATCC 204508 / S288c) (Baker's yeast).